The sequence spans 94 residues: Small ubiquitin-related modifier 3 (94 aa).

K11 participates in a covalent cross-link: Glycyl lysine isopeptide (Lys-Gly) (interchain with G-Cter in SUMO). Positions 15–92 (DHINLKVAGQ…IDVFQQQTGG (78 aa)) constitute a Ubiquitin-like domain. G92 participates in a covalent cross-link: Glycyl lysine isopeptide (Gly-Lys) (interchain with K-? in acceptor proteins). The propeptide occupies 93 to 94 (LC).

It belongs to the ubiquitin family. SUMO subfamily. As to quaternary structure, interacts with SAE2 and UBE2I. Covalently attached to a number of proteins. In terms of processing, polymeric chains can be formed through Lys-11 cross-linking. Post-translationally, cleavage of precursor form by a sentrin-specific protease is necessary for function.

The protein localises to the cytoplasm. The protein resides in the nucleus. It is found in the PML body. In terms of biological role, ubiquitin-like protein which can be covalently attached to target lysines either as a monomer or as a lysine-linked polymer. Does not seem to be involved in protein degradation and may function as an antagonist of ubiquitin in the degradation process. Plays a role in a number of cellular processes such as nuclear transport, DNA replication and repair, mitosis and signal transduction. Covalent attachment to its substrates requires prior activation by the E1 complex SAE1-SAE2 and linkage to the E2 enzyme UBE2I. In Gallus gallus (Chicken), this protein is Small ubiquitin-related modifier 3.